The primary structure comprises 172 residues: Large ribosomal subunit protein uL10 (172 aa).

Belongs to the universal ribosomal protein uL10 family. As to quaternary structure, part of the ribosomal stalk of the 50S ribosomal subunit. The N-terminus interacts with L11 and the large rRNA to form the base of the stalk. The C-terminus forms an elongated spine to which L12 dimers bind in a sequential fashion forming a multimeric L10(L12)X complex.

Functionally, forms part of the ribosomal stalk, playing a central role in the interaction of the ribosome with GTP-bound translation factors. The chain is Large ribosomal subunit protein uL10 from Rhizobium etli (strain CIAT 652).